The sequence spans 518 residues: Ribonuclease Y (518 aa).

A helical membrane pass occupies residues 2–22; sequence VLNILLAIVGLIVGLGLGFVI. Residues 91–119 form a disordered region; sequence QREQTLDRKDDSLEKREGSLEEKEEKLGA. One can recognise a KH domain in the interval 208-268; it reads TVSVVTLPND…IRREIARMTL (61 aa). The HD domain maps to 334–427; that stretch reads VLNHSIEVAK…VAAADALSAA (94 aa).

This sequence belongs to the RNase Y family.

The protein localises to the cell membrane. Endoribonuclease that initiates mRNA decay. This is Ribonuclease Y from Enterococcus faecalis (strain ATCC 700802 / V583).